Reading from the N-terminus, the 142-residue chain is MKTQVAKKEEVTRDWYLVDVDNKVLGRVATEIANVLRGKNKPTFTPSVDTGDFVIVVNAEKIALTGRKLADKVYYSHSSYPGGLKEITAGKLLDKKPEELLKKAVKGMLPKNKLARHMLKKLKIYSGGAHPHAAQNPKNLNI.

It belongs to the universal ribosomal protein uL13 family. As to quaternary structure, part of the 50S ribosomal subunit.

In terms of biological role, this protein is one of the early assembly proteins of the 50S ribosomal subunit, although it is not seen to bind rRNA by itself. It is important during the early stages of 50S assembly. This is Large ribosomal subunit protein uL13 from Geobacter sp. (strain M21).